Consider the following 366-residue polypeptide: Chorismate synthase (366 aa).

R46 serves as a coordination point for NADP(+). Residues R122–S124, N243–G244, G284, K299–S303, and R325 each bind FMN.

Belongs to the chorismate synthase family. Homotetramer. FMNH2 is required as a cofactor.

The enzyme catalyses 5-O-(1-carboxyvinyl)-3-phosphoshikimate = chorismate + phosphate. It participates in metabolic intermediate biosynthesis; chorismate biosynthesis; chorismate from D-erythrose 4-phosphate and phosphoenolpyruvate: step 7/7. Its function is as follows. Catalyzes the anti-1,4-elimination of the C-3 phosphate and the C-6 proR hydrogen from 5-enolpyruvylshikimate-3-phosphate (EPSP) to yield chorismate, which is the branch point compound that serves as the starting substrate for the three terminal pathways of aromatic amino acid biosynthesis. This reaction introduces a second double bond into the aromatic ring system. The sequence is that of Chorismate synthase from Campylobacter hominis (strain ATCC BAA-381 / DSM 21671 / CCUG 45161 / LMG 19568 / NCTC 13146 / CH001A).